The chain runs to 350 residues: Blue-sensitive opsin (350 aa).

Topologically, residues methionine 1–alanine 36 are extracellular. N-linked (GlcNAc...) asparagine glycans are attached at residues asparagine 2 and asparagine 15. Residues phenylalanine 37 to valine 61 form a helical membrane-spanning segment. The Cytoplasmic portion of the chain corresponds to threonine 62–asparagine 73. Residues tyrosine 74–serine 98 traverse the membrane as a helical segment. Topologically, residues methionine 99–glutamate 113 are extracellular. Cysteine 110 and cysteine 187 are joined by a disulfide. The helical transmembrane segment at glycine 114 to isoleucine 133 threads the bilayer. The Cytoplasmic segment spans residues glutamate 134 to histidine 152. A helical membrane pass occupies residues alanine 153–serine 176. Residues arginine 177 to serine 202 lie on the Extracellular side of the membrane. The N-linked (GlcNAc...) asparagine glycan is linked to asparagine 200. The chain crosses the membrane as a helical span at residues phenylalanine 203–valine 230. The Cytoplasmic portion of the chain corresponds to lysine 231–arginine 252. Residues methionine 253–phenylalanine 276 form a helical membrane-spanning segment. Over threonine 277–glycine 284 the chain is Extracellular. A helical transmembrane segment spans residues proline 285–methionine 309. The residue at position 296 (lysine 296) is an N6-(retinylidene)lysine. The Cytoplasmic portion of the chain corresponds to asparagine 310 to alanine 350. Residues glycine 330 to alanine 350 form a disordered region.

It belongs to the G-protein coupled receptor 1 family. Opsin subfamily. In terms of processing, phosphorylated on some or all of the serine and threonine residues present in the C-terminal region. As to expression, rod shaped photoreceptor cells which mediates vision in dim light.

The protein localises to the membrane. Functionally, visual pigments are the light-absorbing molecules that mediate vision. They consist of an apoprotein, opsin, covalently linked to cis-retinal. This Conger conger (Conger eel) protein is Blue-sensitive opsin.